The following is a 412-amino-acid chain: D-nopaline dehydrogenase (412 aa).

Belongs to the lysopine/nopaline/octopine/opine/vitopine dehydrogenases family. Homotetramer.

The enzyme catalyses D-nopaline + NADP(+) + H2O = L-arginine + 2-oxoglutarate + NADPH + H(+). The protein is D-nopaline dehydrogenase (nos) of Agrobacterium vitis (Rhizobium vitis).